A 354-amino-acid polypeptide reads, in one-letter code: Uroporphyrinogen decarboxylase (354 aa).

Substrate-binding positions include 27–31 (RQAGR), Phe46, Asp77, Tyr154, Thr209, and His327.

It belongs to the uroporphyrinogen decarboxylase family. In terms of assembly, homodimer.

The protein localises to the cytoplasm. The catalysed reaction is uroporphyrinogen III + 4 H(+) = coproporphyrinogen III + 4 CO2. It functions in the pathway porphyrin-containing compound metabolism; protoporphyrin-IX biosynthesis; coproporphyrinogen-III from 5-aminolevulinate: step 4/4. Catalyzes the decarboxylation of four acetate groups of uroporphyrinogen-III to yield coproporphyrinogen-III. This chain is Uroporphyrinogen decarboxylase, found in Photorhabdus laumondii subsp. laumondii (strain DSM 15139 / CIP 105565 / TT01) (Photorhabdus luminescens subsp. laumondii).